Reading from the N-terminus, the 75-residue chain is UPF0270 protein PST_1436 (75 aa).

The protein belongs to the UPF0270 family.

This chain is UPF0270 protein PST_1436, found in Stutzerimonas stutzeri (strain A1501) (Pseudomonas stutzeri).